Consider the following 473-residue polypeptide: Trigger factor (473 aa).

One can recognise a PPIase FKBP-type domain in the interval 162–243; that stretch reads GDFVSIDLSA…VKSIKVRELP (82 aa). Residues 433–473 form a disordered region; that stretch reads TAEFFGPSGEQAEAEQDEAAPAEDATEETDADSDEAADDSK. Positions 444 to 473 are enriched in acidic residues; sequence AEAEQDEAAPAEDATEETDADSDEAADDSK.

The protein belongs to the FKBP-type PPIase family. Tig subfamily.

Its subcellular location is the cytoplasm. The enzyme catalyses [protein]-peptidylproline (omega=180) = [protein]-peptidylproline (omega=0). Involved in protein export. Acts as a chaperone by maintaining the newly synthesized protein in an open conformation. Functions as a peptidyl-prolyl cis-trans isomerase. The sequence is that of Trigger factor from Mycolicibacterium vanbaalenii (strain DSM 7251 / JCM 13017 / BCRC 16820 / KCTC 9966 / NRRL B-24157 / PYR-1) (Mycobacterium vanbaalenii).